The chain runs to 102 residues: Small ribosomal subunit protein uS10 (102 aa).

This sequence belongs to the universal ribosomal protein uS10 family. In terms of assembly, part of the 30S ribosomal subunit.

In terms of biological role, involved in the binding of tRNA to the ribosomes. The sequence is that of Small ribosomal subunit protein uS10 from Syntrophotalea carbinolica (strain DSM 2380 / NBRC 103641 / GraBd1) (Pelobacter carbinolicus).